Consider the following 670-residue polypeptide: Solute carrier organic anion transporter family member 1A3 (670 aa).

Over 1-20 (MGDLEKGAATHGAGCFAKIK) the chain is Cytoplasmic. A helical transmembrane segment spans residues 21 to 40 (VFLMALTCAYVSKSLSGTFM). The Extracellular segment spans residues 41–59 (SSMLTQIERQFGIPTAIVG). Residues 60 to 80 (FINGSFEIGNLLLIIFVSYFG) traverse the membrane as a helical segment. The Cytoplasmic segment spans residues 81–86 (MKLHRP). The helical transmembrane segment at 87 to 111 (IVIGVGCAVMGLGCFIISLPHFLMG) threads the bilayer. Residues 112–155 (RYEYETTILPTSNLSSNSFLCMENQTQTLNPAQDPAECVKEVKS) are Extracellular-facing. N-linked (GlcNAc...) asparagine glycosylation is found at asparagine 124 and asparagine 135. A helical transmembrane segment spans residues 156–184 (LMWIYVLVGNIIRGIGETPIMPLGVSYIE). At 185–203 (NFAKSENSPLYIGILETGK) the chain is on the cytoplasmic side. Residues 204–224 (MIGPIFGLLLGSFCASIYVDT) form a helical membrane-spanning segment. Residues 225–242 (GSVNTDDLTITPTDIRWV) are Extracellular-facing. The chain crosses the membrane as a helical span at residues 243–267 (GAWWIGFLVCAGVNILISIPFFFFP). Topologically, residues 268–311 (KTLPKEGLQENVDGTENAKEESTEKRPRKKNRGITKDFFPFLKS) are cytoplasmic. The interval 277–296 (ENVDGTENAKEESTEKRPRK) is disordered. The segment covering 283-292 (ENAKEESTEK) has biased composition (basic and acidic residues). A helical transmembrane segment spans residues 312–333 (PVLQPDLHAVHPYKVLQVNAFN). Over 334-353 (IYFSFLPKYLENQYGKSTAE) the chain is Extracellular. Residues 354 to 377 (VIFLMGVYNLPAICIGYLIAGFMM) traverse the membrane as a helical segment. At 378-381 (KKFK) the chain is on the cytoplasmic side. The chain crosses the membrane as a helical span at residues 382–405 (ITVKTAAFLAFCLSLSEYSFGFCN). The Extracellular portion of the chain corresponds to 406–513 (FLITCDNVPV…PECTNKLQYL (108 aa)). Residues 433-488 (NNVLADCNTRCSCLTKTWDPVCGDNGLAYMSACLAGCEKSVGTGTNMVFHNCSCIQ) form the Kazal-like domain. 3 disulfide bridges follow: cysteine 439-cysteine 469, cysteine 445-cysteine 465, and cysteine 454-cysteine 486. Asparagine 483 and asparagine 492 each carry an N-linked (GlcNAc...) asparagine glycan. Residues 514 to 536 (LILSGFLSILYSFAAIPGYMVFL) form a helical membrane-spanning segment. Residues 537 to 545 (RCIKSEEKS) lie on the Cytoplasmic side of the membrane. The helical transmembrane segment at 546-571 (LGIGIHAFCIRVFAGIPAPIYFGALI) threads the bilayer. The Extracellular segment spans residues 572–605 (DRTCLHWGTQKCGAPGACRMYDINSFRRIYLGMS). A helical transmembrane segment spans residues 606–623 (AALRGSSYLPAFVIVILT). Residues 624-670 (RKFSLPGKINSSEMEIAEMKLTEKESQCTDVHRNPKFKNDGELKTKL) are Cytoplasmic-facing.

Belongs to the organo anion transporter (TC 2.A.60) family. In terms of tissue distribution, all isoforms are detected in kidney, and many are kidney specific. Isoforms 2 and 13 are also detected in liver. Isoforms 4 and 9/K4 are ubiquitous, but isoform 9/K13 is kidney specific. Isoforms 5 and 14 are detected in all tissues tested, with the exception of pancreas and spleen. Isoforms 11 and 15 are detected in kidney, pancreas and testis. Isoform 7 is detected in kidney, liver, testis and spleen.

The protein resides in the cell membrane. Its function is as follows. Mediates the Na(+)-independent transport of organic anions such as methotrexate, taurocholate, folate and prostaglandin E2. May contribute to renal secretion and/or reabsorption of hydrophobic anionic compounds. Mediates renal clearance of methotrexate from the blood. In Rattus norvegicus (Rat), this protein is Solute carrier organic anion transporter family member 1A3 (Slco1a3).